The chain runs to 144 residues: Large ribosomal subunit protein uL15 (144 aa).

The tract at residues 24-52 is disordered; sequence GSGLGKTAGRGHKGLKSRSGGSVRPGFEG.

The protein belongs to the universal ribosomal protein uL15 family. As to quaternary structure, part of the 50S ribosomal subunit.

Functionally, binds to the 23S rRNA. This Cellvibrio japonicus (strain Ueda107) (Pseudomonas fluorescens subsp. cellulosa) protein is Large ribosomal subunit protein uL15.